We begin with the raw amino-acid sequence, 290 residues long: Nucleotide-binding protein FN1089 (290 aa).

An ATP-binding site is contributed by 11–18 (GLSGAGKT). 56–59 (DIRT) is a binding site for GTP.

Belongs to the RapZ-like family.

In terms of biological role, displays ATPase and GTPase activities. The polypeptide is Nucleotide-binding protein FN1089 (Fusobacterium nucleatum subsp. nucleatum (strain ATCC 25586 / DSM 15643 / BCRC 10681 / CIP 101130 / JCM 8532 / KCTC 2640 / LMG 13131 / VPI 4355)).